Reading from the N-terminus, the 885-residue chain is DNA mismatch repair protein MutS (885 aa).

An ATP-binding site is contributed by 626 to 633 (GPNMGGKS).

Belongs to the DNA mismatch repair MutS family.

Functionally, this protein is involved in the repair of mismatches in DNA. It is possible that it carries out the mismatch recognition step. This protein has a weak ATPase activity. The sequence is that of DNA mismatch repair protein MutS from Burkholderia ambifaria (strain MC40-6).